The chain runs to 489 residues: Betaine aldehyde dehydrogenase (489 aa).

K(+) is bound by residues T26 and D93. 150–152 (GAW) is an NAD(+) binding site. K162 acts as the Charge relay system in catalysis. 176-179 (KPSE) serves as a coordination point for NAD(+). V180 lines the K(+) pocket. 229–232 (GVET) is an NAD(+) binding site. Residue L245 coordinates K(+). Catalysis depends on E251, which acts as the Proton acceptor. Residues G253, C285, and E386 each contribute to the NAD(+) site. The Nucleophile role is filled by C285. At C285 the chain carries Cysteine sulfenic acid (-SOH). K(+) is bound by residues K456 and G459. Catalysis depends on E463, which acts as the Charge relay system.

The protein belongs to the aldehyde dehydrogenase family. As to quaternary structure, dimer of dimers. K(+) serves as cofactor.

It carries out the reaction betaine aldehyde + NAD(+) + H2O = glycine betaine + NADH + 2 H(+). It participates in amine and polyamine biosynthesis; betaine biosynthesis via choline pathway; betaine from betaine aldehyde: step 1/1. Involved in the biosynthesis of the osmoprotectant glycine betaine. Catalyzes the irreversible oxidation of betaine aldehyde to the corresponding acid. The protein is Betaine aldehyde dehydrogenase of Paraburkholderia phymatum (strain DSM 17167 / CIP 108236 / LMG 21445 / STM815) (Burkholderia phymatum).